An 81-amino-acid chain; its full sequence is Photosystem I iron-sulfur center (81 aa).

2 consecutive 4Fe-4S ferredoxin-type domains span residues Ser-2 to Trp-31 and Ile-39 to Tyr-68. The [4Fe-4S] cluster site is built by Cys-11, Cys-14, Cys-17, Cys-21, Cys-48, Cys-51, Cys-54, and Cys-58.

The eukaryotic PSI reaction center is composed of at least 11 subunits. It depends on [4Fe-4S] cluster as a cofactor.

Its subcellular location is the plastid. The protein resides in the chloroplast thylakoid membrane. It catalyses the reaction reduced [plastocyanin] + hnu + oxidized [2Fe-2S]-[ferredoxin] = oxidized [plastocyanin] + reduced [2Fe-2S]-[ferredoxin]. In terms of biological role, apoprotein for the two 4Fe-4S centers FA and FB of photosystem I (PSI); essential for photochemical activity. FB is the terminal electron acceptor of PSI, donating electrons to ferredoxin. The C-terminus interacts with PsaA/B/D and helps assemble the protein into the PSI complex. Required for binding of PsaD and PsaE to PSI. PSI is a plastocyanin-ferredoxin oxidoreductase, converting photonic excitation into a charge separation, which transfers an electron from the donor P700 chlorophyll pair to the spectroscopically characterized acceptors A0, A1, FX, FA and FB in turn. This chain is Photosystem I iron-sulfur center, found in Triticum aestivum (Wheat).